The sequence spans 411 residues: Cladofulvin cluster transcriptional coactivator claA (411 aa).

Residues Met-1–Ala-27 are compositionally biased toward polar residues. The tract at residues Met-1–Ala-32 is disordered. The HTH iclR-type domain maps to Leu-47–Leu-117. The segment at residues Leu-77–Arg-96 is a DNA-binding region (H-T-H motif).

Its subcellular location is the nucleus. Functionally, transcriptional coactivator; part of the gene cluster that mediates the biosynthesis of cladofulvin, a conidial pigment not required for virulence but that plays a role in fitness and resistance to environmental stresses including UV light and low-temperature stress. With claE, coregulates the production of cladofulvin. The chain is Cladofulvin cluster transcriptional coactivator claA from Passalora fulva (Tomato leaf mold).